The primary structure comprises 356 residues: Cyanuric acid amidohydrolase (356 aa).

The segment at 1 to 99 (MPIAKVHRIA…FLVFERAEGN (99 aa)) is RU A. Substrate-binding positions include Arg52 and 79–80 (SG). Residues 106-243 (ALAIGRAHTP…HEIVVLGMSE (138 aa)) are RU B. Lys156 is a catalytic residue. Substrate contacts are provided by residues Arg188 and 226 to 227 (SS). Ser226 functions as the Nucleophile in the catalytic mechanism. Residues 249-356 (LAIAHGVMAD…VAVIAARTMG (108 aa)) form an RU C region. Position 287 (Glu287) interacts with Mg(2+). Substrate-binding positions include Arg314 and 333–334 (SG). 5 residues coordinate Mg(2+): Gly336, Gln339, Gly340, Pro341, and Gly344.

This sequence belongs to the cyclic amide hydrolase (CyAH) family. In terms of assembly, homotetramer.

It carries out the reaction cyanurate + H2O = 1-carboxybiuret + H(+). It participates in xenobiotic degradation; atrazine degradation; biuret from cyanurate: step 1/1. Inhibited by barbituric acid. In terms of biological role, responsible for the hydrolysis of cyanuric acid, an intermediate formed during catabolism of s-triazine based compounds in herbicides such as atrazine and polymers such as melamine. Catalyzes the hydrolytic opening of the s-triazine ring of cyanuric acid (2,4,6-trihydroxy-s-triazine) to yield carbon dioxide and carboxybiuret, which spontaneously decarboxylates to biuret. This chain is Cyanuric acid amidohydrolase, found in Azorhizobium caulinodans (strain ATCC 43989 / DSM 5975 / JCM 20966 / LMG 6465 / NBRC 14845 / NCIMB 13405 / ORS 571).